We begin with the raw amino-acid sequence, 337 residues long: Glucokinase (337 aa).

11-16 (ADIGGT) contributes to the ATP binding site.

Belongs to the bacterial glucokinase family.

The protein localises to the cytoplasm. The catalysed reaction is D-glucose + ATP = D-glucose 6-phosphate + ADP + H(+). This chain is Glucokinase, found in Xylella fastidiosa (strain M23).